We begin with the raw amino-acid sequence, 238 residues long: Ubiquinone biosynthesis O-methyltransferase (238 aa).

S-adenosyl-L-methionine-binding residues include R40, G59, D80, and M125.

Belongs to the methyltransferase superfamily. UbiG/COQ3 family.

The enzyme catalyses a 3-demethylubiquinol + S-adenosyl-L-methionine = a ubiquinol + S-adenosyl-L-homocysteine + H(+). The catalysed reaction is a 3-(all-trans-polyprenyl)benzene-1,2-diol + S-adenosyl-L-methionine = a 2-methoxy-6-(all-trans-polyprenyl)phenol + S-adenosyl-L-homocysteine + H(+). Its pathway is cofactor biosynthesis; ubiquinone biosynthesis. Its function is as follows. O-methyltransferase that catalyzes the 2 O-methylation steps in the ubiquinone biosynthetic pathway. This chain is Ubiquinone biosynthesis O-methyltransferase, found in Paracidovorax citrulli (strain AAC00-1) (Acidovorax citrulli).